The following is a 795-amino-acid chain: uncharacterized protein (795 aa).

This is an uncharacterized protein from Methanocaldococcus jannaschii (strain ATCC 43067 / DSM 2661 / JAL-1 / JCM 10045 / NBRC 100440) (Methanococcus jannaschii).